Consider the following 188-residue polypeptide: Archaemetzincin (188 aa).

A Zn(2+)-binding site is contributed by H137. E138 serves as the catalytic Proton acceptor. Zn(2+) is bound by residues H141, H147, C148, C153, C172, and C175.

This sequence belongs to the peptidase M54 family. Monomer. It depends on Zn(2+) as a cofactor.

Probable zinc metalloprotease whose natural substrate is unknown. The sequence is that of Archaemetzincin from Pyrococcus abyssi (strain GE5 / Orsay).